Here is a 193-residue protein sequence, read N- to C-terminus: Capsid protein (193 aa).

The protein localises to the virion. The sequence is that of Capsid protein from Apple chlorotic leaf spot virus (isolate apple) (ACLSV).